The primary structure comprises 205 residues: Probable thymidylate kinase (205 aa).

10–17 provides a ligand contact to ATP; that stretch reads GIDGSGKT.

This sequence belongs to the thymidylate kinase family.

The catalysed reaction is dTMP + ATP = dTDP + ADP. The sequence is that of Probable thymidylate kinase (tmk) from Pyrococcus horikoshii (strain ATCC 700860 / DSM 12428 / JCM 9974 / NBRC 100139 / OT-3).